The sequence spans 367 residues: tRNA 2-selenouridine synthase (367 aa).

A Rhodanese domain is found at 12-135; it reads FLSGVAMLDV…MRGFLIETTD (124 aa). Residue C95 is the S-selanylcysteine intermediate of the active site.

It belongs to the SelU family. Monomer.

The enzyme catalyses 5-methylaminomethyl-2-thiouridine(34) in tRNA + selenophosphate + (2E)-geranyl diphosphate + H2O + H(+) = 5-methylaminomethyl-2-selenouridine(34) in tRNA + (2E)-thiogeraniol + phosphate + diphosphate. The catalysed reaction is 5-methylaminomethyl-2-thiouridine(34) in tRNA + (2E)-geranyl diphosphate = 5-methylaminomethyl-S-(2E)-geranyl-thiouridine(34) in tRNA + diphosphate. It carries out the reaction 5-methylaminomethyl-S-(2E)-geranyl-thiouridine(34) in tRNA + selenophosphate + H(+) = 5-methylaminomethyl-2-(Se-phospho)selenouridine(34) in tRNA + (2E)-thiogeraniol. It catalyses the reaction 5-methylaminomethyl-2-(Se-phospho)selenouridine(34) in tRNA + H2O = 5-methylaminomethyl-2-selenouridine(34) in tRNA + phosphate. Its function is as follows. Involved in the post-transcriptional modification of the uridine at the wobble position (U34) of tRNA(Lys), tRNA(Glu) and tRNA(Gln). Catalyzes the conversion of 2-thiouridine (S2U-RNA) to 2-selenouridine (Se2U-RNA). Acts in a two-step process involving geranylation of 2-thiouridine (S2U) to S-geranyl-2-thiouridine (geS2U) and subsequent selenation of the latter derivative to 2-selenouridine (Se2U) in the tRNA chain. The sequence is that of tRNA 2-selenouridine synthase from Cupriavidus necator (strain ATCC 17699 / DSM 428 / KCTC 22496 / NCIMB 10442 / H16 / Stanier 337) (Ralstonia eutropha).